Reading from the N-terminus, the 872-residue chain is MQPTNPNQFTEKAWEAIAHTPEIAKQHQQQQIESEHLMKALLEQDGLASGILTKAGVNLQKISDRTEQYIQRQPKVSGNSTSVYLGRSLDTLLDRAEAHRKDFQDEYISIEHLLLAYPKDDRFGKGLFQEFALDESKLKNIIKQVRGSQTVTDQNPEGKYQSLEKYGRDLTEAARKGQLDPVIGRDDEIRRTIQILSRRTKNNPVLIGEPGVGKTAIAEGLAQRIVAGDVPQSLKDRKLISLDMGAMIAGAKFRGEFEERLKAVLKEVTESGGNIVLFIDEIHTVVGAGATQGAMDAGNLLKPMLARGELRCIGATTLDEYRKYIEKDAALERRFQQVYVDQPSVEDTISILRGLKERYEVHHGVKISDSSLVAAATLSSRYISDRFLPDKAIDLVDEAAARLKMEITSKPEELDEIDRKILQLEMEKLSLQKESDAASRERLERLEKELADLKEEQRTLNTQWQSEKDVINKLQSVKEEIDKVNLEIQQAERNYDLNRAAELKYGNLTDLHRRLEATERELSQTQGTGKSLLREEVTEADIAEIISKWTGIPISKLVESEKEKLLHLEDELHHRVIGQDEAVTAVADAIQRSRAGLADPNRPTASFVFLGPTGVGKTELAKALASYMFDTEDALVRIDMSEYMEKHAVSRLIGAPPGYVGYEEGGQLTETIRRRPYAVILFDEIEKAHPDVFNIFLQILDDGRVTDAQGHTVDFKNTIIIMTSNIGSQYILDIAGDNSRYDEMRHRVMEAMRNSFRPEFLNRIDEVIIFHSLDKKELRQIVQLQVERLKARLDDRKISLRLSDVALDFLAEVGYDPVFGARPLKRAIQRELETQIAKAILRGEFNDGDTIFVDVQNERLSFSRLPVEVFSS.

Positions 6–148 (PNQFTEKAWE…KNIIKQVRGS (143 aa)) constitute a Clp R domain. 2 repeat regions span residues 9 to 73 (FTEK…IQRQ) and 85 to 148 (LGRS…VRGS). The tract at residues 161–342 (QSLEKYGRDL…RRFQQVYVDQ (182 aa)) is NBD1. 208–215 (GEPGVGKT) provides a ligand contact to ATP. Positions 343 to 551 (PSVEDTISIL…IAEIISKWTG (209 aa)) are linker. Residues 393–527 (IDLVDEAAAR…TERELSQTQG (135 aa)) adopt a coiled-coil conformation. Residues 561 to 772 (EKEKLLHLED…RIDEVIIFHS (212 aa)) form an NBD2 region. Residue 611-618 (GPTGVGKT) participates in ATP binding. The C-terminal stretch occupies residues 773-872 (LDKKELRQIV…SRLPVEVFSS (100 aa)).

The protein belongs to the ClpA/ClpB family. As to quaternary structure, homohexamer. The oligomerization is ATP-dependent.

Its subcellular location is the cytoplasm. Its function is as follows. Part of a stress-induced multi-chaperone system, it is involved in the recovery of the cell from heat-induced damage, in cooperation with DnaK, DnaJ and GrpE. Acts before DnaK, in the processing of protein aggregates. Protein binding stimulates the ATPase activity; ATP hydrolysis unfolds the denatured protein aggregates, which probably helps expose new hydrophobic binding sites on the surface of ClpB-bound aggregates, contributing to the solubilization and refolding of denatured protein aggregates by DnaK. The protein is Chaperone protein ClpB 2 (clpB2) of Nostoc sp. (strain PCC 7120 / SAG 25.82 / UTEX 2576).